Reading from the N-terminus, the 449-residue chain is UMP-CMP kinase 2, mitochondrial (449 aa).

A mitochondrion-targeting transit peptide spans 1–98 (MAFARRLLRG…VRAARLHQRL (98 aa)). 259–266 (GLDATGKT) contributes to the ATP binding site. Positions 380–412 (EERLQRLQGRGMEKTREEAELEANSVFRQKVEM) form a coiled coil.

The protein belongs to the thymidylate kinase family. In terms of tissue distribution, high levels are observed in myeloid, lymphoid and mesenchymal tissues.

It localises to the mitochondrion. It catalyses the reaction CMP + ATP = CDP + ADP. The catalysed reaction is dCMP + ATP = dCDP + ADP. It carries out the reaction a 2'-deoxyribonucleoside 5'-diphosphate + ATP = a 2'-deoxyribonucleoside 5'-triphosphate + ADP. The enzyme catalyses a ribonucleoside 5'-diphosphate + ATP = a ribonucleoside 5'-triphosphate + ADP. Mitochondrial nucleotide monophosphate kinase needed for salvage dNTP synthesis that mediates immunomodulatory and antiviral activities through IFN-dependent and IFN-independent pathways. Restricts the replication of multiple viruses including flaviviruses or coronaviruses. Together with viperin/RSAD2 and ddhCTP, suppresses the replication of several coronaviruses through inhibition of the viral RNA-dependent RNA polymerase activities. Concerning flaviviruses, restricts RNA translation when localized to the mitochondria independently of its kinase activity. Is able to phosphorylate dUMP, dCMP, CMP, UMP and monophosphates of the pyrimidine nucleoside analogs ddC, dFdC, araC, BVDU and FdUrd with ATP as phosphate donor. Efficacy is highest for dUMP followed by dCMP while CMP and UMP are poor substrates. Controls therefore mitochondrial DNA synthesis by supplying required deoxyribonucleotides. CMPK2-dependent mitochondrial DNA synthesis is necessary for the production of oxidized mitochondrial DNA fragments after exposure to NLRP3 activators. In turn, cytosolic oxidized mtDNA associates with the NLRP3 inflammasome complex and is required for its activation. This Homo sapiens (Human) protein is UMP-CMP kinase 2, mitochondrial (CMPK2).